A 163-amino-acid chain; its full sequence is Nucleotide-binding protein CKO_02735 (163 aa).

Belongs to the YajQ family.

In terms of biological role, nucleotide-binding protein. The polypeptide is Nucleotide-binding protein CKO_02735 (Citrobacter koseri (strain ATCC BAA-895 / CDC 4225-83 / SGSC4696)).